Here is a 129-residue protein sequence, read N- to C-terminus: Glycine cleavage system H protein (129 aa).

Positions 24–106 constitute a Lipoyl-binding domain; the sequence is LLKIGVSEFA…IGEGWLVILK (83 aa). N6-lipoyllysine is present on lysine 65.

The protein belongs to the GcvH family. In terms of assembly, the glycine cleavage system is composed of four proteins: P, T, L and H. (R)-lipoate serves as cofactor.

Its function is as follows. The glycine cleavage system catalyzes the degradation of glycine. The H protein shuttles the methylamine group of glycine from the P protein to the T protein. In Prochlorococcus marinus (strain MIT 9215), this protein is Glycine cleavage system H protein.